A 214-amino-acid polypeptide reads, in one-letter code: Adenylate kinase (214 aa).

Position 10 to 15 (10 to 15) interacts with ATP; sequence GAGKGT. Residues 30–59 form an NMP region; that stretch reads STGDMLRAAVKAGSELGLKAKEIMDAGKLV. Residues threonine 31, arginine 36, 57–59, 85–88, and glutamine 92 contribute to the AMP site; these read KLV and GFPR. The interval 122–159 is LID; it reads GRRVHAASGRVYHVKFNPPKVEDKDDVTGEELTIRKDD. Residues arginine 123 and 132–133 contribute to the ATP site; that span reads VY. Residues arginine 156 and arginine 167 each contribute to the AMP site. Arginine 200 is an ATP binding site.

Belongs to the adenylate kinase family. As to quaternary structure, monomer.

The protein resides in the cytoplasm. It catalyses the reaction AMP + ATP = 2 ADP. The protein operates within purine metabolism; AMP biosynthesis via salvage pathway; AMP from ADP: step 1/1. Catalyzes the reversible transfer of the terminal phosphate group between ATP and AMP. Plays an important role in cellular energy homeostasis and in adenine nucleotide metabolism. The protein is Adenylate kinase of Yersinia pseudotuberculosis serotype O:1b (strain IP 31758).